Here is a 210-residue protein sequence, read N- to C-terminus: Orotate phosphoribosyltransferase (210 aa).

5-phospho-alpha-D-ribose 1-diphosphate-binding positions include arginine 96, lysine 100, histidine 102, and 122-130 (EDLISTGGS). Residue serine 126 participates in orotate binding.

Belongs to the purine/pyrimidine phosphoribosyltransferase family. PyrE subfamily. As to quaternary structure, homodimer. Mg(2+) is required as a cofactor.

The enzyme catalyses orotidine 5'-phosphate + diphosphate = orotate + 5-phospho-alpha-D-ribose 1-diphosphate. The protein operates within pyrimidine metabolism; UMP biosynthesis via de novo pathway; UMP from orotate: step 1/2. Its function is as follows. Catalyzes the transfer of a ribosyl phosphate group from 5-phosphoribose 1-diphosphate to orotate, leading to the formation of orotidine monophosphate (OMP). This chain is Orotate phosphoribosyltransferase, found in Streptococcus pneumoniae (strain ATCC BAA-255 / R6).